A 483-amino-acid chain; its full sequence is GTPase Der (483 aa).

EngA-type G domains follow at residues 3–167 (FTLA…GEER) and 212–387 (LRIA…EIWN). GTP contacts are provided by residues 9–16 (GRPNVGKS), 56–60 (DTAGL), 119–122 (NKAE), 218–225 (GRPNAGKS), 265–269 (DTAGM), and 330–333 (NKWD). The KH-like domain maps to 388 to 472 (RRISTGRLNR…PIRLSLRTSD (85 aa)).

Belongs to the TRAFAC class TrmE-Era-EngA-EngB-Septin-like GTPase superfamily. EngA (Der) GTPase family. Associates with the 50S ribosomal subunit.

In terms of biological role, GTPase that plays an essential role in the late steps of ribosome biogenesis. This Brucella melitensis biotype 2 (strain ATCC 23457) protein is GTPase Der.